Consider the following 661-residue polypeptide: Coagulation factor XIII B chain (661 aa).

The N-terminal stretch at 1–20 is a signal peptide; sequence MRLKNLTFIIILIISGELYA. 10 consecutive Sushi domains span residues 24-88, 89-148, 151-210, 211-269, 272-329, 334-391, 394-452, 453-516, 522-580, and 581-647; these read PCGF…PRCF, KKCT…TCRK, ETCL…KCTK, LKCS…VCEG, NRCP…KCIE, VACE…ECVE, ENCK…VCLE, PCTV…PLCT, GMCT…LCLE, and PCTL…PRCI. Cystine bridges form between Cys-25–Cys-76, Cys-59–Cys-87, Cys-91–Cys-135, Cys-118–Cys-146, Cys-153–Cys-197, Cys-180–Cys-208, Cys-213–Cys-255, Cys-241–Cys-267, Cys-274–Cys-316, Cys-302–Cys-327, Cys-336–Cys-378, Cys-364–Cys-389, Cys-396–Cys-439, Cys-425–Cys-450, Cys-454–Cys-505, Cys-486–Cys-515, Cys-524–Cys-567, Cys-553–Cys-578, Cys-582–Cys-636, and Cys-616–Cys-646. Asn-162 carries N-linked (GlcNAc...) asparagine glycosylation. N-linked (GlcNAc...) asparagine glycosylation is present at Asn-545. Positions 617 to 619 match the Cell attachment site motif; it reads RGD.

As to quaternary structure, tetramer of two A chains (F13A1) and two B (F13B) chains.

It is found in the secreted. Its function is as follows. The B chain of factor XIII is not catalytically active, but is thought to stabilize the A subunits and regulate the rate of transglutaminase formation by thrombin. This chain is Coagulation factor XIII B chain (F13B), found in Homo sapiens (Human).